The following is a 301-amino-acid chain: MKIAVLSRNPRLYSTRRLVEAGIERGHEMVVIDTLRAYMNIASHKPQIHYRGKPLEGFDAVIPRIGASVTFYGCAVLRQFEMMGVFPLNESVAIARSRDKLRSLQLLSRRGIGLPVTGFAHSPDDIPDLIQMVNGAPLVIKVLEGTQGIGVVLCETATAAESVIEAFMGLKQDIMVQEYIKEAGGADIRCFVVGDKVIASMKRQAKPGEFRSNLHRGGSASLIKITPEERMTALRAAKVMGLSVAGVDILRSNHGPLVMEVNSSPGLEGIEVTTSKDVAGMIIGYLEKNSGPHMTRTKGKG.

In terms of domain architecture, ATP-grasp spans 104–287 (LQLLSRRGIG…VAGMIIGYLE (184 aa)). ATP contacts are provided by residues Lys-141, 178 to 179 (EY), Asp-187, and 211 to 213 (RSN). Residues Asp-248, Glu-260, and Asn-262 each contribute to the Mg(2+) site. Mn(2+) contacts are provided by Asp-248, Glu-260, and Asn-262.

It belongs to the RimK family. Requires Mg(2+) as cofactor. It depends on Mn(2+) as a cofactor.

In Pseudomonas syringae pv. syringae (strain B728a), this protein is Probable alpha-L-glutamate ligase.